A 251-amino-acid chain; its full sequence is Eukaryotic translation initiation factor 4E-3 (251 aa).

The interval 200–251 is disordered; sequence DSSARTSSTVKPRICLPAKDPAPVKEKGPAATTSPSNPGTEATGTSPATPTP. Positions 230–251 are enriched in polar residues; the sequence is ATTSPSNPGTEATGTSPATPTP.

This sequence belongs to the eukaryotic initiation factor 4E family. As to quaternary structure, eIF4F is a multi-subunit complex, the composition of which varies with external and internal environmental conditions. It is composed of at least eIF4A, eIF4E and eIF4G. eIF4E is also known to interact with other partners. Interacts with mxt. Component of the pid-1 variant of the PETISCO complex (also called the pid-3, erh-2, tofu-6, and ife-3 small RNA complex) containing at least pid-1, tofu-6, ife-3, pid-3, and erh-2, which is required for the biogenesis of a class of 21 nucleotide PIWI-interacting RNAs (piRNAs) that possess a uracil residue at the 5'-end (also called 21U-RNAs). Component of the tost-1 variant of the PETISCO complex (also called the pid-3, erh-2, tofu-6, and ife-3 small RNA complex) containing at least tost-1, tofu-6, ife-3, pid-3, and erh-2, which plays an essential role in embryogenesis. Within the pid-1 and tost-1 variants of the PETISCO complexes interacts with tofu-6 (via C-terminus). In contrast to the pid-1 variant of the PETISCO complex, the tost-1 variant of the PETISCO complex plays a minor role in the biogenesis of 21U-RNAs. Highly expressed in the germline (at protein level).

The protein resides in the cytoplasmic granule. Its subcellular location is the cytoplasm. The protein localises to the perinuclear region. Functionally, recognizes and binds the 7-methylguanosine-containing mRNA cap during an early step in the initiation of protein synthesis and facilitates ribosome binding by inducing the unwinding of the mRNAs secondary structures. All 5 eIF4E proteins bind monomethyl cap structures. Only ife-1, ife-2 and ife-5 bind trimethyl cap structures which result from trans-splicing. Translation of trimethyl cap structure mRNAs may be regulated by intracellular redox state; disulfide bonds change the width and depth of the cap-binding cavity determining selectivity to mRNA caps. Ife-3 is essential for viability. Component of the pid-1 and tost-1 variants of the PETISCO complexes, which have roles in the biogenesis of a class of 21 nucleotide PIWI-interacting RNAs (piRNAs) that possess a uracil residue at the 5'-end (also called 21U-RNAs) and embryogenesis, respectively. Within the pid-1 variant of the PETISCO complex binds to capped 21U-RNA precursor molecules, possibly playing a role in the processing of the 5' end of the molecules to promote binding of other complex components such as pid-3. However, it is not essential for the biogenesis of 21U-RNAs by itself. Within the tost-1 variant of the PETISCO complex binds to splice leader SL1 RNA fragments to possibly play a role in their processing. This is Eukaryotic translation initiation factor 4E-3 from Caenorhabditis elegans.